The primary structure comprises 644 residues: Exoribonuclease 2 (644 aa).

Residues 189–516 (RQDLTALNFV…NHRLLKAVIK (328 aa)) enclose the RNB domain. Positions 561–643 (NTRFAAEIID…ETRSIIARPA (83 aa)) constitute an S1 motif domain.

The protein belongs to the RNR ribonuclease family. RNase II subfamily.

Its subcellular location is the cytoplasm. It catalyses the reaction Exonucleolytic cleavage in the 3'- to 5'-direction to yield nucleoside 5'-phosphates.. In terms of biological role, involved in mRNA degradation. Hydrolyzes single-stranded polyribonucleotides processively in the 3' to 5' direction. This chain is Exoribonuclease 2, found in Salmonella enteritidis PT4 (strain P125109).